Reading from the N-terminus, the 190-residue chain is Xanthine phosphoribosyltransferase (190 aa).

Xanthine is bound by residues Leu-20 and Asn-27. 129-133 (ASGSA) serves as a coordination point for 5-phospho-alpha-D-ribose 1-diphosphate. Lys-157 provides a ligand contact to xanthine.

It belongs to the purine/pyrimidine phosphoribosyltransferase family. Xpt subfamily. Homodimer.

It is found in the cytoplasm. It catalyses the reaction XMP + diphosphate = xanthine + 5-phospho-alpha-D-ribose 1-diphosphate. It functions in the pathway purine metabolism; XMP biosynthesis via salvage pathway; XMP from xanthine: step 1/1. Its function is as follows. Converts the preformed base xanthine, a product of nucleic acid breakdown, to xanthosine 5'-monophosphate (XMP), so it can be reused for RNA or DNA synthesis. The protein is Xanthine phosphoribosyltransferase of Clostridium tetani (strain Massachusetts / E88).